A 423-amino-acid chain; its full sequence is Dihydrolipoyllysine-residue succinyltransferase component of 2-oxoglutarate dehydrogenase complex (423 aa).

The Lipoyl-binding domain maps to 1 to 76 (MPEVKVPELA…EVGQAIAVIG (76 aa)). At K42 the chain carries N6-lipoyllysine. Positions 76 to 185 (GEGSGNASKE…APAKEEKKYN (110 aa)) are disordered. A compositionally biased stretch (polar residues) spans 80 to 96 (GNASKENSNDNTPQQND). A compositionally biased stretch (basic and acidic residues) spans 99-115 (TNNKKEETTNKSADKAE). Residues 116-131 (VNQTNDDNQQRVNATP) are compositionally biased toward polar residues. The region spanning 128 to 164 (NATPSARRYARENGVNLAEVSPKTNDVVRKEDIDKKQ) is the Peripheral subunit-binding (PSBD) domain. Over residues 153-164 (DVVRKEDIDKKQ) the composition is skewed to basic and acidic residues. A compositionally biased stretch (low complexity) spans 165 to 177 (QAPASTQTTQQAP). Active-site residues include H394 and D398.

This sequence belongs to the 2-oxoacid dehydrogenase family. Forms a 24-polypeptide structural core with octahedral symmetry. Part of the 2-oxoglutarate dehydrogenase (OGDH) complex composed of E1 (2-oxoglutarate dehydrogenase), E2 (dihydrolipoamide succinyltransferase) and E3 (dihydrolipoamide dehydrogenase); the complex contains multiple copies of the three enzymatic components (E1, E2 and E3). Requires (R)-lipoate as cofactor.

It carries out the reaction N(6)-[(R)-dihydrolipoyl]-L-lysyl-[protein] + succinyl-CoA = N(6)-[(R)-S(8)-succinyldihydrolipoyl]-L-lysyl-[protein] + CoA. The protein operates within amino-acid degradation; L-lysine degradation via saccharopine pathway; glutaryl-CoA from L-lysine: step 6/6. E2 component of the 2-oxoglutarate dehydrogenase (OGDH) complex which catalyzes the second step in the conversion of 2-oxoglutarate to succinyl-CoA and CO(2). This chain is Dihydrolipoyllysine-residue succinyltransferase component of 2-oxoglutarate dehydrogenase complex (odhB), found in Staphylococcus aureus (strain MRSA252).